The primary structure comprises 238 residues: Probable transcriptional regulatory protein CF0838 (238 aa).

It belongs to the TACO1 family.

Its subcellular location is the cytoplasm. The sequence is that of Probable transcriptional regulatory protein CF0838 from Chlamydia felis (strain Fe/C-56) (Chlamydophila felis).